The chain runs to 484 residues: Serine/threonine-protein kinase RIO1 (484 aa).

The 327-residue stretch at 76–402 (ADLNGCLSTG…EFDNADHECS (327 aa)) folds into the Protein kinase domain. ATP is bound by residues Lys-125 and Leu-198. The active-site Proton acceptor is Asp-244. Residues Asn-249 and Asp-261 each contribute to the Mg(2+) site. The active-site 4-aspartylphosphate intermediate is Asp-261. Positions 398–484 (DHECSSGTEE…KLVKKTKSKK (87 aa)) are disordered. Phosphoserine; by CK2 is present on residues Ser-402, Ser-403, Ser-409, Ser-416, Ser-417, and Ser-419. The segment at 403 to 484 (SGTEEFSDDE…KLVKKTKSKK (82 aa)) is interaction with CKA2. The segment covering 407–434 (EFSDDEEDGSSGSEEDDEEEGEYYDDDE) has biased composition (acidic residues). An association with (pre-)40S ribosomal subunit region spans residues 440-484 (GKKHEDKDLKKLRKQEAKDAKREKRKTKVKKHIKKKLVKKTKSKK). The segment covering 442-461 (KHEDKDLKKLRKQEAKDAKR) has biased composition (basic and acidic residues). Positions 462 to 484 (EKRKTKVKKHIKKKLVKKTKSKK) are enriched in basic residues.

It belongs to the protein kinase superfamily. RIO-type Ser/Thr kinase family. As to quaternary structure, interacts with CKA2. Mg(2+) serves as cofactor. Post-translationally, autophosphorylated. Phosphorylated by casein kinase II (CK2). Phosphorylation by CK2 stimulates RIO1 kinase activity and targets it for degradation at the G1/S transition of the cell cycle.

The protein resides in the cytoplasm. The catalysed reaction is L-seryl-[protein] + ATP = O-phospho-L-seryl-[protein] + ADP + H(+). The enzyme catalyses L-threonyl-[protein] + ATP = O-phospho-L-threonyl-[protein] + ADP + H(+). It carries out the reaction ATP + H2O = ADP + phosphate + H(+). In terms of biological role, required for the final endonucleolytic cleavage at site D converting 20S pre-rRNA into the mature 18S rRNA. Required for the final steps of cytoplasmic maturation of the 40S ribosomal subunit. The association with the very late 40S subunit intermediate seems to follow RIO2 association with precursors of the 40S subunit and may involve a translation-like checkpoint point cycle preceeding the binding to the 60S ribosomal subunit. Despite the protein kinase domain is proposed to act predominantly as an ATPase. The catalytic activity regulates its dynamic association with the 40S subunit. Has a role in the cell cycle where it is required for entrance into S-phase and in the control of the onset of anaphase. Appears to also be involved in the maintenance of chromosome stability and correct mitotic segregation. This is Serine/threonine-protein kinase RIO1 (RIO1) from Saccharomyces cerevisiae (strain ATCC 204508 / S288c) (Baker's yeast).